A 157-amino-acid chain; its full sequence is 6,7-dimethyl-8-ribityllumazine synthase (157 aa).

5-amino-6-(D-ribitylamino)uracil is bound by residues Phe-22, Ala-57 to Glu-59, and Thr-81 to Ile-83. Gly-86–Thr-87 serves as a coordination point for (2S)-2-hydroxy-3-oxobutyl phosphate. The active-site Proton donor is the His-89. Phe-114 is a 5-amino-6-(D-ribitylamino)uracil binding site. Arg-128 contributes to the (2S)-2-hydroxy-3-oxobutyl phosphate binding site.

This sequence belongs to the DMRL synthase family. In terms of assembly, forms an icosahedral capsid composed of 60 subunits, arranged as a dodecamer of pentamers.

The enzyme catalyses (2S)-2-hydroxy-3-oxobutyl phosphate + 5-amino-6-(D-ribitylamino)uracil = 6,7-dimethyl-8-(1-D-ribityl)lumazine + phosphate + 2 H2O + H(+). It functions in the pathway cofactor biosynthesis; riboflavin biosynthesis; riboflavin from 2-hydroxy-3-oxobutyl phosphate and 5-amino-6-(D-ribitylamino)uracil: step 1/2. In terms of biological role, catalyzes the formation of 6,7-dimethyl-8-ribityllumazine by condensation of 5-amino-6-(D-ribitylamino)uracil with 3,4-dihydroxy-2-butanone 4-phosphate. This is the penultimate step in the biosynthesis of riboflavin. This Haemophilus influenzae (strain 86-028NP) protein is 6,7-dimethyl-8-ribityllumazine synthase.